A 638-amino-acid chain; its full sequence is tRNA uridine 5-carboxymethylaminomethyl modification enzyme MnmG (638 aa).

FAD-binding positions include 15-20, Ile-127, and Ser-182; that span reads GAGHAG. NAD(+) is bound at residue 276-290; it reads GPRYCPSIEDKIVRF. Gln-373 contributes to the FAD binding site.

Belongs to the MnmG family. Homodimer. Heterotetramer of two MnmE and two MnmG subunits. FAD serves as cofactor.

It localises to the cytoplasm. Functionally, NAD-binding protein involved in the addition of a carboxymethylaminomethyl (cmnm) group at the wobble position (U34) of certain tRNAs, forming tRNA-cmnm(5)s(2)U34. The polypeptide is tRNA uridine 5-carboxymethylaminomethyl modification enzyme MnmG (Streptococcus suis (strain 98HAH33)).